The following is a 195-amino-acid chain: Probable nicotinate-nucleotide adenylyltransferase (195 aa).

This sequence belongs to the NadD family.

The enzyme catalyses nicotinate beta-D-ribonucleotide + ATP + H(+) = deamido-NAD(+) + diphosphate. It functions in the pathway cofactor biosynthesis; NAD(+) biosynthesis; deamido-NAD(+) from nicotinate D-ribonucleotide: step 1/1. In terms of biological role, catalyzes the reversible adenylation of nicotinate mononucleotide (NaMN) to nicotinic acid adenine dinucleotide (NaAD). This chain is Probable nicotinate-nucleotide adenylyltransferase, found in Dictyoglomus thermophilum (strain ATCC 35947 / DSM 3960 / H-6-12).